A 69-amino-acid chain; its full sequence is uncharacterized protein (69 aa).

A signal peptide spans 1–21; it reads MELLIPLSLLGLYLFSGTRDS. Residue Asn41 is glycosylated (N-linked (GlcNAc...) asparagine).

The protein resides in the secreted. This is an uncharacterized protein from Dictyostelium discoideum (Social amoeba).